The following is a 362-amino-acid chain: MPGIIDSSSKQSAIVGNSYGSTELSHNVPIPHAEGDNVVVRTRAVSVNPVDAKMMGPYVTAGAIAGCDFAGEIEAIGPEALSWGFKIGDRVCASIMGMNPLEPDHGAFAQHVATHANALVRIPETMSFEEAAALCTCFMTCGLALFQSLGLPGSPVKPSASATQVLVYGGATATGTAAIQLLRLAGFTPIATCSPHSNELVKTFGAEATFDYNDPECAAKIRAFTKNGLRYALDCITNRSSMQICYGSLGRVGGRYTALDPYPEDIAATRKIVKAAWVVGPIMLGHDIGWPAPHGRKADPDLFKFGMEWKKLVEGLMAKGVIKPHPLDVRKGGMERVIECMEAIRAKEVNGKKLVVSLRENH.

50 to 53 (VDAK) contacts NADP(+). 136 to 143 (TCFMTCGL) serves as a coordination point for substrate. Residues 171–174 (ATAT), 194–197 (SPHS), tyrosine 212, and 259–260 (LD) each bind NADP(+). A substrate-binding site is contributed by 280–284 (GPIML). 349–350 (VN) is an NADP(+) binding site.

This sequence belongs to the zinc-containing alcohol dehydrogenase family. Monomer.

It functions in the pathway secondary metabolite biosynthesis. Its function is as follows. Trans-enoyl reductase; part of the gene cluster that mediates the biosynthesis of the trans-fused decalin-containing tetramic acid phomasetin, the stereochemical opposite of the HIV-1 integrase inhibitor equisetin. The PKS module of phm1 together with the enoylreductase phm4 catalyze the formation of the polyketide unit which is then conjugated to L-serine by the condensation domain of the phm1 NRPS module. Activity of the Dieckmann cyclase domain (RED) of phm1 results in release of the Dieckmann product intermediate. The Diels-Alderase phm7 then uses the Dieckmann product of phm1 as substrate and catalyzes the Diels-Alder cycloaddition to form the decalin ring of N-desmethylphomasetin. N-desmethylphomasetin is further methylated to phomasetin by the methyltransferase phm5. The sequence is that of Trans-enoyl reductase phm4 from Pyrenochaetopsis sp.